The primary structure comprises 851 residues: DNA mismatch repair protein MutS (851 aa).

Position 602–609 (602–609) interacts with ATP; sequence GPNMSGKS.

This sequence belongs to the DNA mismatch repair MutS family.

Its function is as follows. This protein is involved in the repair of mismatches in DNA. It is possible that it carries out the mismatch recognition step. This protein has a weak ATPase activity. This chain is DNA mismatch repair protein MutS, found in Streptococcus pyogenes serotype M12 (strain MGAS2096).